The chain runs to 582 residues: GDP-Man:Man(3)GlcNAc(2)-PP-Dol alpha-1,2-mannosyltransferase (582 aa).

Residues 1-12 (MESCWLTMESYQ) lie on the Lumenal side of the membrane. Residues 13–33 (AALVVCIVSGLILAVAGYGNV) traverse the membrane as a helical segment. The Cytoplasmic segment spans residues 34 to 240 (RRLACEFLLK…CCPPDVWCDT (207 aa)). Residues 241 to 261 (MGYPFGYPFVSWLCRIPIITY) constitute an intramembrane region (helical). Over 262–461 (THYPVVSIDM…EHFGIAVVEY (200 aa)) the chain is Cytoplasmic. The helical intramembrane region spans 462-482 (AASGLITLAHASAGPLLDIIV). Topologically, residues 483-582 (PWDIEGDKQL…LHTLRNDKVE (100 aa)) are cytoplasmic.

It belongs to the glycosyltransferase group 1 family.

It localises to the endoplasmic reticulum membrane. The enzyme catalyses an alpha-D-Man-(1-&gt;3)-[alpha-D-Man-(1-&gt;6)]-beta-D-Man-(1-&gt;4)-beta-D-GlcNAc-(1-&gt;4)-alpha-D-GlcNAc-diphospho-di-trans,poly-cis-dolichol + 2 GDP-alpha-D-mannose = an alpha-D-Man-(1-&gt;2)-alpha-D-Man-(1-&gt;2)-alpha-D-Man-(1-&gt;3)-[alpha-D-Man-(1-&gt;6)]-beta-D-Man-(1-&gt;4)-beta-D-GlcNAc-(1-&gt;4)-alpha-D-GlcNAc-diphospho-di-trans,poly-cis-dolichol + 2 GDP + 2 H(+). Its pathway is protein modification; protein glycosylation. GDP-Man:Man(3)GlcNAc(2)-PP-Dol alpha-1,2-mannosyltransferase that operates in the biosynthetic pathway of dolichol-linked oligosaccharides, the glycan precursors employed in protein asparagine (N)-glycosylation. The assembly of dolichol-linked oligosaccharides begins on the cytosolic side of the endoplasmic reticulum membrane and finishes in its lumen. The sequential addition of sugars to dolichol pyrophosphate produces dolichol-linked oligosaccharides containing fourteen sugars, including two GlcNAcs, nine mannoses and three glucoses. Once assembled, the oligosaccharide is transferred from the lipid to nascent proteins by oligosaccharyltransferases. Catalyzes, on the cytoplasmic face of the endoplasmic reticulum, the addition of the fourth and fifth mannose residues to the dolichol-linked oligosaccharide chain, to produce Man(5)GlcNAc(2)-PP-dolichol core oligosaccharide. This chain is GDP-Man:Man(3)GlcNAc(2)-PP-Dol alpha-1,2-mannosyltransferase (ALG11), found in Eremothecium gossypii (strain ATCC 10895 / CBS 109.51 / FGSC 9923 / NRRL Y-1056) (Yeast).